We begin with the raw amino-acid sequence, 193 residues long: Ion-translocating oxidoreductase complex subunit A (193 aa).

The next 6 helical transmembrane spans lie at 5 to 25, 39 to 59, 67 to 87, 102 to 122, 134 to 154, and 171 to 191; these read LLLLIGTVLVNNFVLVKFLGL, IGMGLATTFVLTLASVCSYLV, LGIEYLRTMSFILVIAVVVQF, VLGIFLPLITTNCAVLGVALL, IIYGFGAAVGFSLVLILFSAM, and SIAMITAGLMSLAFMGFTGLV.

Belongs to the NqrDE/RnfAE family. The complex is composed of six subunits: RnfA, RnfB, RnfC, RnfD, RnfE and RnfG.

It localises to the cell inner membrane. Part of a membrane-bound complex that couples electron transfer with translocation of ions across the membrane. This chain is Ion-translocating oxidoreductase complex subunit A, found in Aliivibrio fischeri (strain ATCC 700601 / ES114) (Vibrio fischeri).